The following is a 212-amino-acid chain: Adenylate kinase (212 aa).

Gly-14 to Thr-19 contributes to the ATP binding site. The segment at Ser-34–Val-63 is NMP. Residues Thr-35, Arg-40, Ser-61–Val-63, Gly-89–Arg-92, and Gln-96 each bind AMP. The tract at residues Gln-126 to Asp-163 is LID. Position 127 (Arg-127) interacts with ATP. The Zn(2+) site is built by Cys-130 and Cys-133. Ser-136–Tyr-137 contacts ATP. Positions 150 and 153 each coordinate Zn(2+). Residues Arg-160 and Arg-171 each contribute to the AMP site. Gln-199 is an ATP binding site.

This sequence belongs to the adenylate kinase family. Monomer.

It localises to the cytoplasm. It carries out the reaction AMP + ATP = 2 ADP. The protein operates within purine metabolism; AMP biosynthesis via salvage pathway; AMP from ADP: step 1/1. In terms of biological role, catalyzes the reversible transfer of the terminal phosphate group between ATP and AMP. Plays an important role in cellular energy homeostasis and in adenine nucleotide metabolism. The protein is Adenylate kinase of Mesomycoplasma hyopneumoniae (strain J / ATCC 25934 / NCTC 10110) (Mycoplasma hyopneumoniae).